The primary structure comprises 437 residues: Asparagine--tRNA ligase (437 aa).

The protein belongs to the class-II aminoacyl-tRNA synthetase family. Homodimer.

It is found in the cytoplasm. It carries out the reaction tRNA(Asn) + L-asparagine + ATP = L-asparaginyl-tRNA(Asn) + AMP + diphosphate + H(+). The protein is Asparagine--tRNA ligase of Symbiobacterium thermophilum (strain DSM 24528 / JCM 14929 / IAM 14863 / T).